A 272-amino-acid chain; its full sequence is GPN-loop GTPase 3 (272 aa).

12-17 is a GTP binding site; that stretch reads GAGKST. Residues 69–71 carry the Gly-Pro-Asn (GPN)-loop; involved in dimer interface motif; sequence GPN. 172–175 is a GTP binding site; it reads SKMD. Residues 253 to 272 form a disordered region; sequence QYGEDEEPKVPKDMDDGDFD.

Belongs to the GPN-loop GTPase family. As to quaternary structure, heterodimers with GPN1 or GPN2. Binds to RNA polymerase II (RNAPII).

Its function is as follows. Small GTPase required for proper nuclear import of RNA polymerase II and III (RNAPII and RNAPIII). May act at an RNAP assembly step prior to nuclear import. The protein is GPN-loop GTPase 3 of Cryptococcus neoformans var. neoformans serotype D (strain JEC21 / ATCC MYA-565) (Filobasidiella neoformans).